The primary structure comprises 985 residues: Alanine--tRNA ligase, mitochondrial (985 aa).

A mitochondrion-targeting transit peptide spans 1–23 (MAASVAAAAGRLRRAIGRSCPWQ). ATP contacts are provided by residues Arg-105, His-123, Trp-205, and 235 to 237 (LWN). Residues Asn-237 and Asp-260 each contribute to the L-alanine site. Gly-264 serves as a coordination point for ATP. Zn(2+) is bound by residues His-632, His-636, Cys-749, and His-753.

Belongs to the class-II aminoacyl-tRNA synthetase family. As to quaternary structure, monomer. It depends on Zn(2+) as a cofactor.

The protein localises to the mitochondrion. The catalysed reaction is tRNA(Ala) + L-alanine + ATP = L-alanyl-tRNA(Ala) + AMP + diphosphate. The enzyme catalyses (S)-lactate + ATP + H(+) = (S)-lactoyl-AMP + diphosphate. It catalyses the reaction (S)-lactoyl-AMP + L-lysyl-[protein] = N(6)-[(S)-lactoyl]-L-lysyl-[protein] + AMP + 2 H(+). In terms of biological role, catalyzes the attachment of alanine to tRNA(Ala) in a two-step reaction: alanine is first activated by ATP to form Ala-AMP and then transferred to the acceptor end of tRNA(Ala). Also edits incorrectly charged tRNA(Ala) via its editing domain. In presence of high levels of lactate, also acts as a protein lactyltransferase that mediates lactylation of lysine residues in target proteins, such as CGAS. Acts as an inhibitor of cGAS/STING signaling by catalyzing lactylation of CGAS, preventing the formation of liquid-like droplets in which CGAS is activated. In Rattus norvegicus (Rat), this protein is Alanine--tRNA ligase, mitochondrial (Aars2).